The sequence spans 131 residues: Small ribosomal subunit protein uS11 (131 aa).

It belongs to the universal ribosomal protein uS11 family. Part of the 30S ribosomal subunit. Interacts with proteins S7 and S18. Binds to IF-3.

Functionally, located on the platform of the 30S subunit, it bridges several disparate RNA helices of the 16S rRNA. Forms part of the Shine-Dalgarno cleft in the 70S ribosome. The polypeptide is Small ribosomal subunit protein uS11 (Helicobacter pylori (strain G27)).